Reading from the N-terminus, the 169-residue chain is Protein YABBY 7 (169 aa).

A C4-type zinc finger spans residues 21-48 (CSFCATVLLVSVPCSSVLRVVAVQCGHC). The tract at residues 63-122 (SASIELTPQELDAGPPPGEYSDESSGDDREGRDAEDDAPAPAAAAVANKPPGRKQRTPSA) is disordered.

It belongs to the YABBY family. As to expression, expressed in leaf sheaths and flowers.

The protein resides in the nucleus. The polypeptide is Protein YABBY 7 (YAB7) (Oryza sativa subsp. japonica (Rice)).